The following is a 376-amino-acid chain: Succinyl-diaminopimelate desuccinylase (376 aa).

His-64 lines the Zn(2+) pocket. Residue Asp-66 is part of the active site. Zn(2+) is bound at residue Asp-97. The active-site Proton acceptor is Glu-131. Zn(2+) is bound by residues Glu-132, Glu-160, and His-347.

Belongs to the peptidase M20A family. DapE subfamily. As to quaternary structure, homodimer. Zn(2+) is required as a cofactor. Requires Co(2+) as cofactor.

It carries out the reaction N-succinyl-(2S,6S)-2,6-diaminopimelate + H2O = (2S,6S)-2,6-diaminopimelate + succinate. It functions in the pathway amino-acid biosynthesis; L-lysine biosynthesis via DAP pathway; LL-2,6-diaminopimelate from (S)-tetrahydrodipicolinate (succinylase route): step 3/3. Functionally, catalyzes the hydrolysis of N-succinyl-L,L-diaminopimelic acid (SDAP), forming succinate and LL-2,6-diaminopimelate (DAP), an intermediate involved in the bacterial biosynthesis of lysine and meso-diaminopimelic acid, an essential component of bacterial cell walls. The sequence is that of Succinyl-diaminopimelate desuccinylase from Wigglesworthia glossinidia brevipalpis.